Here is a 90-residue protein sequence, read N- to C-terminus: Probable Fe(2+)-trafficking protein (90 aa).

The protein belongs to the Fe(2+)-trafficking protein family.

Its function is as follows. Could be a mediator in iron transactions between iron acquisition and iron-requiring processes, such as synthesis and/or repair of Fe-S clusters in biosynthetic enzymes. This Pseudoalteromonas atlantica (strain T6c / ATCC BAA-1087) protein is Probable Fe(2+)-trafficking protein.